Reading from the N-terminus, the 130-residue chain is UPF0212 protein PF1486 (130 aa).

Belongs to the UPF0212 family.

The protein is UPF0212 protein PF1486 of Pyrococcus furiosus (strain ATCC 43587 / DSM 3638 / JCM 8422 / Vc1).